The primary structure comprises 875 residues: Alanine--tRNA ligase (875 aa).

Zn(2+) contacts are provided by H596, H600, C700, and H704.

This sequence belongs to the class-II aminoacyl-tRNA synthetase family. Zn(2+) serves as cofactor.

The protein resides in the cytoplasm. It carries out the reaction tRNA(Ala) + L-alanine + ATP = L-alanyl-tRNA(Ala) + AMP + diphosphate. Functionally, catalyzes the attachment of alanine to tRNA(Ala) in a two-step reaction: alanine is first activated by ATP to form Ala-AMP and then transferred to the acceptor end of tRNA(Ala). Also edits incorrectly charged Ser-tRNA(Ala) and Gly-tRNA(Ala) via its editing domain. The polypeptide is Alanine--tRNA ligase (Methanocella arvoryzae (strain DSM 22066 / NBRC 105507 / MRE50)).